The chain runs to 250 residues: MGAAASIQTTVNTLSERISSKLEQEANASAQTKCDIEIGNFYIRQNHGCNITVKNMCSADADAQLDAVLSAATETYSGLTPEQKAYVPAMFTAALNIQTSVNTVVRDFENYVKQTCNSSAVVDNKLKIQNVIIDECYGAPGSPTNLEFINTGSSKGNCAIKALMQLTTKATTQIAPRQVAGTGVQFYMIVIGVIILAALFMYYAKRMLFTSTNDKIKLILANKENVHWTTYMDTFFRTSPMIIATTDIQN.

A lipid anchor (N-myristoyl glycine; by host) is attached at Gly2. A targeting to MV membrane region spans residues 2–12 (GAAASIQTTVN). Over 2-183 (GAAASIQTTV…IAPRQVAGTG (182 aa)) the chain is Virion surface. Intrachain disulfides connect Cys34-Cys57, Cys49-Cys136, and Cys116-Cys158. The chain crosses the membrane as a helical span at residues 184 to 204 (VQFYMIVIGVIILAALFMYYA). Over 205–250 (KRMLFTSTNDKIKLILANKENVHWTTYMDTFFRTSPMIIATTDIQN) the chain is Intravirion.

Belongs to the orthopoxvirus OPG095 family. As to quaternary structure, component of the entry fusion complex (EFC) composed of OPG053, OPG076, OPG086, OPG094, OPG095, OPG099, OPG107, OPG143, OPG104, OPG147 and OPG155. Except for OPG095 and OPG053, each of the EFC proteins is required for assembly or stability of the complex. Post-translationally, myristoylated. Disulfid bonds are oxidized in the cytoplasm by OPG088 protein. In terms of processing, unglycosylated because produced in viral factories instead of the classic ER -Golgi route.

It localises to the virion membrane. Functionally, component of the entry fusion complex (EFC), which consists of 11 proteins. During cell infection, this complex mediates entry of the virion core into the host cytoplasm by a two-step mechanism consisting of lipid mixing of the viral and cellular membranes and subsequent pore formation. In Monkeypox virus, this protein is Entry-fusion complex associated protein OPG095 (OPG099).